We begin with the raw amino-acid sequence, 434 residues long: Serine--tRNA ligase (434 aa).

241–243 (TAE) contacts L-serine. 272–274 (RSE) provides a ligand contact to ATP. Glutamate 295 contributes to the L-serine binding site. An ATP-binding site is contributed by 359 to 362 (EISS). Serine 395 lines the L-serine pocket.

It belongs to the class-II aminoacyl-tRNA synthetase family. Type-1 seryl-tRNA synthetase subfamily. In terms of assembly, homodimer. The tRNA molecule binds across the dimer.

It localises to the cytoplasm. The catalysed reaction is tRNA(Ser) + L-serine + ATP = L-seryl-tRNA(Ser) + AMP + diphosphate + H(+). It carries out the reaction tRNA(Sec) + L-serine + ATP = L-seryl-tRNA(Sec) + AMP + diphosphate + H(+). The protein operates within aminoacyl-tRNA biosynthesis; selenocysteinyl-tRNA(Sec) biosynthesis; L-seryl-tRNA(Sec) from L-serine and tRNA(Sec): step 1/1. Catalyzes the attachment of serine to tRNA(Ser). Is also able to aminoacylate tRNA(Sec) with serine, to form the misacylated tRNA L-seryl-tRNA(Sec), which will be further converted into selenocysteinyl-tRNA(Sec). The chain is Serine--tRNA ligase from Glaesserella parasuis serovar 5 (strain SH0165) (Haemophilus parasuis).